Here is a 429-residue protein sequence, read N- to C-terminus: Ribosomal RNA small subunit methyltransferase B (429 aa).

Residues 254 to 260 (CAAPGGK), Asp-277, Asp-303, and Asp-322 each bind S-adenosyl-L-methionine. Cys-375 acts as the Nucleophile in catalysis.

Belongs to the class I-like SAM-binding methyltransferase superfamily. RsmB/NOP family.

The protein localises to the cytoplasm. It carries out the reaction cytidine(967) in 16S rRNA + S-adenosyl-L-methionine = 5-methylcytidine(967) in 16S rRNA + S-adenosyl-L-homocysteine + H(+). Its function is as follows. Specifically methylates the cytosine at position 967 (m5C967) of 16S rRNA. This Salmonella arizonae (strain ATCC BAA-731 / CDC346-86 / RSK2980) protein is Ribosomal RNA small subunit methyltransferase B.